The chain runs to 194 residues: Coiled-coil domain-containing protein 184 (194 aa).

Positions 39-68 form a coiled coil; sequence GMKELMEHLKAQLQALFEDVRAMRGALDEQ. The segment at 101–176 is disordered; that stretch reads GLGVVGGKGS…LLGGDGPLVE (76 aa). Residues 135–145 are compositionally biased toward acidic residues; the sequence is PEDEEEEEEEK.

The polypeptide is Coiled-coil domain-containing protein 184 (CCDC184) (Homo sapiens (Human)).